The following is a 166-amino-acid chain: MFIKGVILSSYGVNGYARVKSISNNFCDFINLKDNKVLLKKNNGFTIEVKVVDVNIKSNSLYLKFEGINTPESVKSLIGFELWVDDSLASSLKEGEYYLGKLIGYAIVNDNRRLGEVVSFFEYLNSVFLEVKVGIKFFFIPFLSIYIGDIDAREKTIELKVLDLLR.

In terms of domain architecture, PRC barrel spans 94–165; sequence EGEYYLGKLI…TIELKVLDLL (72 aa).

It belongs to the RimM family. In terms of assembly, binds ribosomal protein uS19.

The protein localises to the cytoplasm. An accessory protein needed during the final step in the assembly of 30S ribosomal subunit, possibly for assembly of the head region. Essential for efficient processing of 16S rRNA. May be needed both before and after RbfA during the maturation of 16S rRNA. It has affinity for free ribosomal 30S subunits but not for 70S ribosomes. The sequence is that of Ribosome maturation factor RimM from Borrelia garinii subsp. bavariensis (strain ATCC BAA-2496 / DSM 23469 / PBi) (Borreliella bavariensis).